The sequence spans 472 residues: Gamma-glutamylputrescine synthetase PuuA (472 aa).

Positions 35 to 129 (PNTQYVDVLL…MLLTMVDEDG (95 aa)) constitute a GS beta-grasp domain. The region spanning 136 to 472 (PRNVLNRLWQ…TEIEWMLKNA (337 aa)) is the GS catalytic domain.

This sequence belongs to the glutamine synthetase family. As to quaternary structure, dodecamer. Mg(2+) serves as cofactor. It depends on Mn(2+) as a cofactor.

It catalyses the reaction putrescine + L-glutamate + ATP = gamma-L-glutamylputrescine + ADP + phosphate + H(+). Its pathway is amine and polyamine degradation; putrescine degradation; 4-aminobutanoate from putrescine: step 1/4. Involved in the breakdown of putrescine. Catalyzes the ATP-dependent gamma-glutamylation of putrescine, producing gamma-L-glutamylputrescine. Absolutely essential to utilize putrescine as both nitrogen and carbon sources and to decrease the toxicity of putrescine, which can lead to inhibition of cell growth and protein synthesis. In vitro is also able to use several diamines, and spermidine and spermine, instead of putrescine, but with a much lower activity, and cannot catalyze the gamma-glutamylation of ornithine or GABA. The protein is Gamma-glutamylputrescine synthetase PuuA of Escherichia coli (strain K12).